Reading from the N-terminus, the 594-residue chain is Capsid vertex component 1 (594 aa).

4 disordered regions span residues 52–77 (GRSTGRAPGGDEDDAPASDDAEDAVG), 176–205 (NKRDRQHQLATTTNHRRRGGLRNNLDNGSD), 443–468 (ARRQRERSAPKPQELLFGPRNESGPP), and 575–594 (GRQEPETPRVSGRRLPFDDL). The segment covering 61 to 76 (GDEDDAPASDDAEDAV) has biased composition (acidic residues).

This sequence belongs to the herpesviridae CVC1 protein family. As to quaternary structure, interacts (via C-terminus) with capsid vertex component 2/CVC2.

The protein resides in the virion. Its subcellular location is the host nucleus. Capsid vertex-specific component that plays a role during viral DNA encapsidation, assuring correct genome cleavage and presumably stabilizing capsids that contain full-length viral genomes. The chain is Capsid vertex component 1 from Homo sapiens (Human).